Here is a 131-residue protein sequence, read N- to C-terminus: Maturin (131 aa).

Position 34 is a phosphotyrosine (Y34). Residues 107–120 (FEEYSADVEEEEPE) show a composition bias toward acidic residues. The tract at residues 107 to 131 (FEEYSADVEEEEPEADHPQMGVSQQ) is disordered.

This sequence belongs to the MTURN family. Post-translationally, phosphorylation at Tyr-34 is essential for its ability to promote megakaryocyte differentiation. As to expression, expressed in the thymus, bone marrow and spleen.

The protein localises to the cytoplasm. In terms of biological role, promotes megakaryocyte differentiation by enhancing ERK and JNK signaling as well as up-regulating RUNX1 and FLI1 expression. Represses NF-kappa-B transcriptional activity by inhibiting phosphorylation of RELA at 'Ser- 536'. May be involved in early neuronal development. The polypeptide is Maturin (Mturn) (Mus musculus (Mouse)).